Consider the following 369-residue polypeptide: Anhydro-N-acetylmuramic acid kinase (369 aa).

12–19 (GTSMDGVD) provides a ligand contact to ATP.

The protein belongs to the anhydro-N-acetylmuramic acid kinase family.

It carries out the reaction 1,6-anhydro-N-acetyl-beta-muramate + ATP + H2O = N-acetyl-D-muramate 6-phosphate + ADP + H(+). It participates in amino-sugar metabolism; 1,6-anhydro-N-acetylmuramate degradation. It functions in the pathway cell wall biogenesis; peptidoglycan recycling. Catalyzes the specific phosphorylation of 1,6-anhydro-N-acetylmuramic acid (anhMurNAc) with the simultaneous cleavage of the 1,6-anhydro ring, generating MurNAc-6-P. Is required for the utilization of anhMurNAc either imported from the medium or derived from its own cell wall murein, and thus plays a role in cell wall recycling. The protein is Anhydro-N-acetylmuramic acid kinase of Shewanella baltica (strain OS223).